The chain runs to 227 residues: PKHD-type hydroxylase Swit_4046 (227 aa).

The 101-residue stretch at 78–178 folds into the Fe2OG dioxygenase domain; it reads KVFPPLFNLY…RLCSFFWIQS (101 aa). Fe cation is bound by residues His96, Asp98, and His159. Residue Arg169 participates in 2-oxoglutarate binding.

It depends on Fe(2+) as a cofactor. L-ascorbate is required as a cofactor.

In Rhizorhabdus wittichii (strain DSM 6014 / CCUG 31198 / JCM 15750 / NBRC 105917 / EY 4224 / RW1) (Sphingomonas wittichii), this protein is PKHD-type hydroxylase Swit_4046.